A 496-amino-acid chain; its full sequence is UDP-glycosyltransferase 73C4 (496 aa).

UDP-alpha-D-glucose-binding positions include Ser297, 357-359 (SPQ), 374-382 (HCGWNSTLE), and 396-399 (FGDQ). The disordered stretch occupies residues 450–475 (SDDAKERRRRVKELGESAHKAVEEGG). The span at 451–472 (DDAKERRRRVKELGESAHKAVE) shows a compositional bias: basic and acidic residues.

It belongs to the UDP-glycosyltransferase family.

The polypeptide is UDP-glycosyltransferase 73C4 (UGT73C4) (Arabidopsis thaliana (Mouse-ear cress)).